A 388-amino-acid polypeptide reads, in one-letter code: Probable peptidoglycan glycosyltransferase FtsW (388 aa).

Topologically, residues 1–19 are cytoplasmic; it reads MMSPSTSAPHNQPIQPELD. The chain crosses the membrane as a helical span at residues 20–40; it reads VLLVSTVLLLLGLGLVMVYSA. Residues 41–55 are Periplasmic-facing; sequence SIAIAEAKFGEGSSY. Residues 56-76 traverse the membrane as a helical segment; the sequence is YFLARQASYILAGIAVGIGCF. Topologically, residues 77–89 are cytoplasmic; it reads RIPLRWWQAYSHY. Residues 90–110 form a helical membrane-spanning segment; the sequence is LLGLGILLLLVVLIPGISHEI. Over 111–116 the chain is Periplasmic; sequence NGSRRW. A helical membrane pass occupies residues 117 to 137; that stretch reads IPLGITSFQPSELMKLIILIF. The Cytoplasmic portion of the chain corresponds to 138–151; that stretch reads TADYVVRKAAFKDH. Residues 152–172 traverse the membrane as a helical segment; that stretch reads FFKGFLPILALLTIVSLLLLM. Topologically, residues 173–175 are periplasmic; that stretch reads EPD. Transmembrane regions (helical) follow at residues 176–196 and 197–217; these read LGAT…NGMS and LKMF…LIII. Topologically, residues 218–284 are periplasmic; sequence EPYRMDRINA…DFMFAVLAEE (67 aa). The chain crosses the membrane as a helical span at residues 285–305; sequence LGFAGVVTVISLFFFLLVRIF. The Cytoplasmic portion of the chain corresponds to 306–324; it reads KVGRTAARLGDQFGSLVAQ. Residues 325-345 form a helical membrane-spanning segment; sequence GIGVWLGLQAFINMGVNMGLL. Topologically, residues 346 to 351 are periplasmic; the sequence is PTKGLT. The chain crosses the membrane as a helical span at residues 352-372; sequence LPFMSYGGSSIVINSIAIAIL. The Cytoplasmic segment spans residues 373–388; it reads LRIDWENRLKRRGLNA.

Belongs to the SEDS family. FtsW subfamily.

It localises to the cell inner membrane. The catalysed reaction is [GlcNAc-(1-&gt;4)-Mur2Ac(oyl-L-Ala-gamma-D-Glu-L-Lys-D-Ala-D-Ala)](n)-di-trans,octa-cis-undecaprenyl diphosphate + beta-D-GlcNAc-(1-&gt;4)-Mur2Ac(oyl-L-Ala-gamma-D-Glu-L-Lys-D-Ala-D-Ala)-di-trans,octa-cis-undecaprenyl diphosphate = [GlcNAc-(1-&gt;4)-Mur2Ac(oyl-L-Ala-gamma-D-Glu-L-Lys-D-Ala-D-Ala)](n+1)-di-trans,octa-cis-undecaprenyl diphosphate + di-trans,octa-cis-undecaprenyl diphosphate + H(+). The protein operates within cell wall biogenesis; peptidoglycan biosynthesis. Functionally, peptidoglycan polymerase that is essential for cell division. The chain is Probable peptidoglycan glycosyltransferase FtsW from Nitrosomonas europaea (strain ATCC 19718 / CIP 103999 / KCTC 2705 / NBRC 14298).